We begin with the raw amino-acid sequence, 122 residues long: uncharacterized protein (122 aa).

A coiled-coil region spans residues Lys-46 to Asn-116.

This is an uncharacterized protein from Invertebrate iridescent virus 6 (IIV-6).